We begin with the raw amino-acid sequence, 171 residues long: 3-hydroxydecanoyl-[acyl-carrier-protein] dehydratase (171 aa).

H70 is a catalytic residue.

The protein belongs to the thioester dehydratase family. FabA subfamily. Homodimer.

Its subcellular location is the cytoplasm. The enzyme catalyses a (3R)-hydroxyacyl-[ACP] = a (2E)-enoyl-[ACP] + H2O. It carries out the reaction (3R)-hydroxydecanoyl-[ACP] = (2E)-decenoyl-[ACP] + H2O. The catalysed reaction is (2E)-decenoyl-[ACP] = (3Z)-decenoyl-[ACP]. It functions in the pathway lipid metabolism; fatty acid biosynthesis. Functionally, necessary for the introduction of cis unsaturation into fatty acids. Catalyzes the dehydration of (3R)-3-hydroxydecanoyl-ACP to E-(2)-decenoyl-ACP and then its isomerization to Z-(3)-decenoyl-ACP. Can catalyze the dehydratase reaction for beta-hydroxyacyl-ACPs with saturated chain lengths up to 16:0, being most active on intermediate chain length. The sequence is that of 3-hydroxydecanoyl-[acyl-carrier-protein] dehydratase from Xanthomonas euvesicatoria pv. vesicatoria (strain 85-10) (Xanthomonas campestris pv. vesicatoria).